The primary structure comprises 557 residues: Intraflagellar transport protein 56 (557 aa).

A disordered region spans residues 1 to 30 (MLLSRMKPAVGGEASTSSNEKKRKNKSKKI). The segment covering 21–30 (KKRKNKSKKI) has biased composition (basic residues). TPR repeat units follow at residues 60–93 (EHAD…PDCP), 95–128 (DVWV…LQNR), 154–187 (TEDQ…NREF), and 471–504 (ANDC…EGKR).

This sequence belongs to the IFT56 family. In terms of assembly, component of the IFT complex B.

It is found in the cell projection. Its subcellular location is the cilium. Component of the intraflagellar transport (IFT) complex B required for transport of proteins in the motile cilium. Required for transport of specific ciliary cargo proteins related to motility, while it is neither required for IFT complex B assembly or motion nor for cilium assembly. Plays a key role in maintaining the integrity of the IFT complex B and the proper ciliary localization of the IFT complex B components. Essential for maintaining proper microtubule organization within the ciliary axoneme. This is Intraflagellar transport protein 56 from Danio rerio (Zebrafish).